The sequence spans 663 residues: MSDNPSSRAGPEVVPTPPPSPAAEAAVTALPAHGHRPPATGSALAKLALGALGVVYGDIGTSPLYALKECFTGHHGVQATPANVLGVLSLVFWAMTFVVTFKYLSFVMRADNRGEGGILALLALVGKHEVRRSGKQLLIILGLFGAALLYGDGVITPAISVLGAVEGLSVAAPALEHWVVPVTVGILALLFFIQRRGTAAVGAVFGPVMLVWFLCIAILGVRGILFDATILQAVLPTHAVAFFARNSWHGFLVLGGVVLVITGGEALYADMGHFGKRPIRFAWLLVAMPALMLNYMGQGAILLHDPQAARNPFYLLVPGWALYPMIAVATAAAIVASQALISGAFSLTRQAVQLGYSPRVTIRHTSSTEIGQIYVPEVNALLGAATIALVLGFKSSSNLAAAYGIAVTGTMAITTLLFHRVARDLWRWPRWRAWPLTLLFLLVDLAFFGANIVKVEEGGWFPLAAAAFVFTLLSTWKRGREGLADLMRGAGLPLDVFLEDIARRKPQRVPGTAVFMTGNTGTVPPVLLHHLKHNKVLHERVVLTSIMSEEIPSVRDAERVTVKELGSGFIQVIARYGFMETPDVPAMFASLPHRKLDGPRIELKPMETTYYLGRETLLPTGPSKMARWRKRLFIIMSRNAQTASAFFGLPPNRVVEMGAQLQL.

Residues 1–23 are disordered; sequence MSDNPSSRAGPEVVPTPPPSPAA. 12 consecutive transmembrane segments (helical) span residues 81–101, 137–157, 173–193, 201–221, 224–244, 248–268, 283–303, 315–335, 373–393, 399–419, 433–453, and 455–475; these read PANV…VVTF, LLII…VITP, PALE…LFFI, VGAV…ILGV, ILFD…AFFA, WHGF…EALY, WLLV…AILL, LLVP…AAIV, IYVP…VLGF, LAAA…LLFH, AWPL…ANIV, and VEEG…LLST.

The protein belongs to the HAK/KUP transporter (TC 2.A.72) family.

Its subcellular location is the cell inner membrane. The catalysed reaction is K(+)(in) + H(+)(in) = K(+)(out) + H(+)(out). Functionally, transport of potassium into the cell. Likely operates as a K(+):H(+) symporter. The polypeptide is Probable potassium transport system protein Kup (Anaeromyxobacter sp. (strain Fw109-5)).